A 469-amino-acid polypeptide reads, in one-letter code: Putative dipeptidase SAUSA300_1697 (469 aa).

His84 provides a ligand contact to Zn(2+). Asp86 is an active-site residue. Residue Asp115 participates in Zn(2+) binding. Residue Glu149 is the Proton acceptor of the active site. Zn(2+) contacts are provided by Glu150, Asp173, and His440.

Belongs to the peptidase M20A family. Zn(2+) serves as cofactor.

The polypeptide is Putative dipeptidase SAUSA300_1697 (Staphylococcus aureus (strain USA300)).